A 31-amino-acid chain; its full sequence is Photosystem II reaction center protein T (31 aa).

The helical transmembrane segment at 3–23 threads the bilayer; that stretch reads ALVYTFLLVGTLGIIFFSIFF.

It belongs to the PsbT family. PSII is composed of 1 copy each of membrane proteins PsbA, PsbB, PsbC, PsbD, PsbE, PsbF, PsbH, PsbI, PsbJ, PsbK, PsbL, PsbM, PsbT, PsbY, PsbZ, Psb30/Ycf12, at least 3 peripheral proteins of the oxygen-evolving complex and a large number of cofactors. It forms dimeric complexes.

Its subcellular location is the plastid. The protein localises to the chloroplast thylakoid membrane. Found at the monomer-monomer interface of the photosystem II (PS II) dimer, plays a role in assembly and dimerization of PSII. PSII is a light-driven water plastoquinone oxidoreductase, using light energy to abstract electrons from H(2)O, generating a proton gradient subsequently used for ATP formation. The chain is Photosystem II reaction center protein T from Bigelowiella natans (Pedinomonas minutissima).